The following is a 261-amino-acid chain: Imidazole glycerol phosphate synthase subunit HisF (261 aa).

Active-site residues include Asp-12 and Asp-131.

This sequence belongs to the HisA/HisF family. Heterodimer of HisH and HisF.

The protein resides in the cytoplasm. The catalysed reaction is 5-[(5-phospho-1-deoxy-D-ribulos-1-ylimino)methylamino]-1-(5-phospho-beta-D-ribosyl)imidazole-4-carboxamide + L-glutamine = D-erythro-1-(imidazol-4-yl)glycerol 3-phosphate + 5-amino-1-(5-phospho-beta-D-ribosyl)imidazole-4-carboxamide + L-glutamate + H(+). The protein operates within amino-acid biosynthesis; L-histidine biosynthesis; L-histidine from 5-phospho-alpha-D-ribose 1-diphosphate: step 5/9. Its function is as follows. IGPS catalyzes the conversion of PRFAR and glutamine to IGP, AICAR and glutamate. The HisF subunit catalyzes the cyclization activity that produces IGP and AICAR from PRFAR using the ammonia provided by the HisH subunit. The sequence is that of Imidazole glycerol phosphate synthase subunit HisF from Brucella abortus (strain S19).